We begin with the raw amino-acid sequence, 102 residues long: Flagellar hook-basal body complex protein FliE (102 aa).

It belongs to the FliE family.

Its subcellular location is the bacterial flagellum basal body. The protein is Flagellar hook-basal body complex protein FliE of Halalkalibacterium halodurans (strain ATCC BAA-125 / DSM 18197 / FERM 7344 / JCM 9153 / C-125) (Bacillus halodurans).